Reading from the N-terminus, the 557-residue chain is DNA replication factor Cdt1 (557 aa).

A PIP-box K+4 motif motif is present at residues 1–25 (MAQSRVTDFYACRRPGLTTPRAKSI). The interval 20–113 (PRAKSICLTP…VCPSPVKRTK (94 aa)) is disordered. Thr-28 carries the post-translational modification Phosphothreonine; by MAPK8. Position 30 is a phosphoserine (Ser-30). Residues 65-67 (RRL) carry the Cyclin-binding motif motif. The span at 69–81 (LPGLDSCPSSLPE) shows a compositional bias: low complexity. Residues 82–106 (PSSPAEPSPPADPSPPADPGSPVCP) show a composition bias toward pro residues. The residue at position 107 (Ser-107) is a Phosphoserine; by MAPK8. Residues 163 to 203 (PSTPDAKVPTEQPCVEKAPAYQRFHALAQPGLPGLVLPYKY) form an interaction with GMNN region. The residue at position 392 (Ser-392) is a Phosphoserine. Positions 397 to 427 (RSAEPGSPGTSTPPLPATPPATPPAASPSAL) are disordered. Over residues 407 to 422 (STPPLPATPPATPPAA) the composition is skewed to pro residues. The interval 463-557 (LERLPELARV…LAHHVHAEGL (95 aa)) is interaction with LRWD1.

The protein belongs to the Cdt1 family. As to quaternary structure, interacts with GMNN; the interaction inhibits the binding of the MCM complex to origins of replication. Interacts with MCM6. Interacts with CDC6; are mutually dependent on one another for loading MCM complexes onto chromatin. Interacts with PCNA. Interacts with LRWD1 during G1 phase and during mitosis. Interacts with NDC80 subunit of the NDC80 complex; leading to kinetochore localization. Interacts with KAT7. Interacts with ubiquitin-binding protein FAF1; the interaction is likely to promote CDT1 degradation. Post-translationally, two independent E3 ubiquitin ligase complexes, SCF(SKP2) and the DCX(DTL) complex, mediated CDT1 degradation in S phase. Ubiquitinated by the DCX(DTL) complex, in response to DNA damage, leading to its degradation. Ubiquitination by the DCX(DTL) complex is necessary to ensure proper cell cycle regulation and is PCNA-dependent: interacts with PCNA via its PIP-box, while the presence of the containing the 'K+4' motif in the PIP box, recruit the DCX(DTL) complex, leading to its degradation. Phosphorylation at Thr-28 by CDK2 targets CDT1 for ubiquitynation by SCF(SKP2) E3 ubiquitin ligase and subsequent degradation. The interaction with GMNN protects it against ubiquitination. Deubiquitinated by USP37. Ubiquitinated and degraded by the SCF(FBXO31) complex during the G2 phase to prevent re-replication. In terms of processing, phosphorylation by cyclin A-dependent kinases at Thr-28 targets CDT1 for ubiquitynation by SCF(SKP2) E3 ubiquitin ligase and subsequent degradation. Phosphorylated at Thr-28 by MAPK8/JNK1, which blocks replication licensing in response to stress. Binding to GMNN is not affected by phosphorylation.

The protein localises to the nucleus. Its subcellular location is the chromosome. It localises to the centromere. The protein resides in the kinetochore. Functionally, required for both DNA replication and mitosis. DNA replication licensing factor, required for pre-replication complex assembly. Cooperates with CDC6 and the origin recognition complex (ORC) during G1 phase of the cell cycle to promote the loading of the mini-chromosome maintenance (MCM) complex onto DNA to generate pre-replication complexes (pre-RC). Required also for mitosis by promoting stable kinetochore-microtubule attachments. Potential oncogene. This chain is DNA replication factor Cdt1, found in Mus musculus (Mouse).